The primary structure comprises 657 residues: Leishmanolysin (657 aa).

Residues 1–41 (MSVDSSSSSTHRRRCVAARLVRLAAAGAAVTVAVGTAAAWA) form the signal peptide. The propeptide at 42–102 (HAGALQHRCI…DPRPGSAPTV (61 aa)) is activation peptide. Over 44–611 (GALQHRCIHD…DRMVGLATAA (568 aa)) the chain is Extracellular. Residue Asn-107 is glycosylated (N-linked (GlcNAc...) asparagine). Disulfide bonds link Cys-127–Cys-144 and Cys-193–Cys-232. Zn(2+) is bound at residue His-266. The active site involves Glu-267. His-270 provides a ligand contact to Zn(2+). A glycan (N-linked (GlcNAc...) asparagine) is linked at Asn-302. Disulfide bonds link Cys-316-Cys-388, Cys-395-Cys-458, Cys-408-Cys-427, Cys-417-Cys-492, Cys-469-Cys-513, Cys-518-Cys-568, and Cys-538-Cys-561. His-336 provides a ligand contact to Zn(2+). Residues Asn-399, Asn-409, Asn-445, Asn-466, and Asn-501 are each glycosylated (N-linked (GlcNAc...) asparagine). Residues 612–632 (TVLLGMVLSLMALVVVWLLLV) traverse the membrane as a helical segment. Over 633–657 (SCPWWCCKLGGPPASVTPACSPETE) the chain is Cytoplasmic.

This sequence belongs to the peptidase M8 family. Requires Zn(2+) as cofactor.

It localises to the membrane. The catalysed reaction is Preference for hydrophobic residues at P1 and P1' and basic residues at P2' and P3'. A model nonapeptide is cleaved at -Ala-Tyr-|-Leu-Lys-Lys-.. Has an integral role during the infection of macrophages in the mammalian host. The sequence is that of Leishmanolysin (mspC) from Leishmania tropica.